A 482-amino-acid polypeptide reads, in one-letter code: tRNA sulfurtransferase (482 aa).

In terms of domain architecture, THUMP spans 61-165 (AEVLEILTHT…GDKLNQVLAR (105 aa)). ATP is bound by residues 183–184 (LI), lysine 265, glycine 287, and glutamine 296. The cysteines at positions 344 and 456 are disulfide-linked. The region spanning 404–482 (VEEHAVVLDI…GFNNVKVYRP (79 aa)) is the Rhodanese domain. The active-site Cysteine persulfide intermediate is the cysteine 456.

Belongs to the ThiI family.

It is found in the cytoplasm. It catalyses the reaction [ThiI sulfur-carrier protein]-S-sulfanyl-L-cysteine + a uridine in tRNA + 2 reduced [2Fe-2S]-[ferredoxin] + ATP + H(+) = [ThiI sulfur-carrier protein]-L-cysteine + a 4-thiouridine in tRNA + 2 oxidized [2Fe-2S]-[ferredoxin] + AMP + diphosphate. The enzyme catalyses [ThiS sulfur-carrier protein]-C-terminal Gly-Gly-AMP + S-sulfanyl-L-cysteinyl-[cysteine desulfurase] + AH2 = [ThiS sulfur-carrier protein]-C-terminal-Gly-aminoethanethioate + L-cysteinyl-[cysteine desulfurase] + A + AMP + 2 H(+). The protein operates within cofactor biosynthesis; thiamine diphosphate biosynthesis. Its function is as follows. Catalyzes the ATP-dependent transfer of a sulfur to tRNA to produce 4-thiouridine in position 8 of tRNAs, which functions as a near-UV photosensor. Also catalyzes the transfer of sulfur to the sulfur carrier protein ThiS, forming ThiS-thiocarboxylate. This is a step in the synthesis of thiazole, in the thiamine biosynthesis pathway. The sulfur is donated as persulfide by IscS. The chain is tRNA sulfurtransferase from Vibrio parahaemolyticus serotype O3:K6 (strain RIMD 2210633).